Reading from the N-terminus, the 291-residue chain is Formamidopyrimidine-DNA glycosylase (291 aa).

The active-site Schiff-base intermediate with DNA is the proline 2. Residue glutamate 3 is the Proton donor of the active site. Catalysis depends on lysine 58, which acts as the Proton donor; for beta-elimination activity. 3 residues coordinate DNA: histidine 100, arginine 123, and lysine 166. The FPG-type zinc-finger motif lies at 257-291 (SVYGREGKECLHCGIPIVRILQSGRSSFYCSQCQK). Arginine 281 serves as the catalytic Proton donor; for delta-elimination activity.

It belongs to the FPG family. As to quaternary structure, monomer. Zn(2+) serves as cofactor.

The enzyme catalyses Hydrolysis of DNA containing ring-opened 7-methylguanine residues, releasing 2,6-diamino-4-hydroxy-5-(N-methyl)formamidopyrimidine.. It catalyses the reaction 2'-deoxyribonucleotide-(2'-deoxyribose 5'-phosphate)-2'-deoxyribonucleotide-DNA = a 3'-end 2'-deoxyribonucleotide-(2,3-dehydro-2,3-deoxyribose 5'-phosphate)-DNA + a 5'-end 5'-phospho-2'-deoxyribonucleoside-DNA + H(+). In terms of biological role, involved in base excision repair of DNA damaged by oxidation or by mutagenic agents. Acts as a DNA glycosylase that recognizes and removes damaged bases. Has a preference for oxidized purines, such as 7,8-dihydro-8-oxoguanine (8-oxoG). Has AP (apurinic/apyrimidinic) lyase activity and introduces nicks in the DNA strand. Cleaves the DNA backbone by beta-delta elimination to generate a single-strand break at the site of the removed base with both 3'- and 5'-phosphates. The sequence is that of Formamidopyrimidine-DNA glycosylase from Bartonella henselae (strain ATCC 49882 / DSM 28221 / CCUG 30454 / Houston 1) (Rochalimaea henselae).